We begin with the raw amino-acid sequence, 497 residues long: Glutamyl-tRNA(Gln) amidotransferase subunit A (497 aa).

Residues Lys85 and Ser160 each act as charge relay system in the active site. Ser184 acts as the Acyl-ester intermediate in catalysis.

The protein belongs to the amidase family. GatA subfamily. As to quaternary structure, heterotrimer of A, B and C subunits.

It carries out the reaction L-glutamyl-tRNA(Gln) + L-glutamine + ATP + H2O = L-glutaminyl-tRNA(Gln) + L-glutamate + ADP + phosphate + H(+). In terms of biological role, allows the formation of correctly charged Gln-tRNA(Gln) through the transamidation of misacylated Glu-tRNA(Gln) in organisms which lack glutaminyl-tRNA synthetase. The reaction takes place in the presence of glutamine and ATP through an activated gamma-phospho-Glu-tRNA(Gln). The chain is Glutamyl-tRNA(Gln) amidotransferase subunit A (gatA) from Mycobacterium leprae (strain TN).